The chain runs to 212 residues: Protein-L-isoaspartate O-methyltransferase (212 aa).

Ser60 is an active-site residue.

Belongs to the methyltransferase superfamily. L-isoaspartyl/D-aspartyl protein methyltransferase family.

It is found in the cytoplasm. The catalysed reaction is [protein]-L-isoaspartate + S-adenosyl-L-methionine = [protein]-L-isoaspartate alpha-methyl ester + S-adenosyl-L-homocysteine. Functionally, catalyzes the methyl esterification of L-isoaspartyl residues in peptides and proteins that result from spontaneous decomposition of normal L-aspartyl and L-asparaginyl residues. It plays a role in the repair and/or degradation of damaged proteins. This chain is Protein-L-isoaspartate O-methyltransferase, found in Pseudomonas entomophila (strain L48).